The following is a 687-amino-acid chain: Fatty acid oxidation complex subunit alpha (687 aa).

The enoyl-CoA hydratase stretch occupies residues 1–191 (MKNTSAFAWT…KLGVVDASVP (191 aa)). Residues 307–687 (KSIDYVGVLG…ADKYGDRFIE (381 aa)) are 3-hydroxyacyl-CoA dehydrogenase.

This sequence in the N-terminal section; belongs to the enoyl-CoA hydratase/isomerase family. It in the central section; belongs to the 3-hydroxyacyl-CoA dehydrogenase family. Heterotetramer of two alpha chains (FadJ) and two beta chains (FadI).

Its subcellular location is the cytoplasm. The enzyme catalyses a (3S)-3-hydroxyacyl-CoA = a (2E)-enoyl-CoA + H2O. The catalysed reaction is a 4-saturated-(3S)-3-hydroxyacyl-CoA = a (3E)-enoyl-CoA + H2O. It carries out the reaction a (3S)-3-hydroxyacyl-CoA + NAD(+) = a 3-oxoacyl-CoA + NADH + H(+). It catalyses the reaction (3S)-3-hydroxybutanoyl-CoA = (3R)-3-hydroxybutanoyl-CoA. Its pathway is lipid metabolism; fatty acid beta-oxidation. Functionally, catalyzes the formation of a hydroxyacyl-CoA by addition of water on enoyl-CoA. Also exhibits 3-hydroxyacyl-CoA epimerase and 3-hydroxyacyl-CoA dehydrogenase activities. The protein is Fatty acid oxidation complex subunit alpha of Aliivibrio fischeri (strain ATCC 700601 / ES114) (Vibrio fischeri).